A 337-amino-acid chain; its full sequence is MTKSTVALTLGDPAGIGPELVAKLLAKQNIREKANIVLVADKDELEKGMEIAKAQFVYEEVSFHQLGQYEFKTGVPVLISHKSSHPKPFEYGKVTEQSGVYILETLKVALNLAKMGYVQAICFAPLNKQAMHKGGLRYRDELHWFAEQTDFNEFVCELNVVDDIWAARVTSHIPFKDIVPNLSIKGVFDCIHLLYRSLVQAGVENPKIAVQALNPHGGEGGVFGDEEMTIIQPGMEQARKAGIDVYGPFPGDTTMREVERLKINGVVSMYHDQFSTALKILGFERGVTVQGGIPIPITTANHGTAFDLHGKNIAIPTAFEAAFNIAVRMGQGVLNQK.

The a divalent metal cation site is built by histidine 172, histidine 216, and histidine 271.

The protein belongs to the PdxA family. As to quaternary structure, homodimer. Zn(2+) is required as a cofactor. It depends on Mg(2+) as a cofactor. Co(2+) serves as cofactor.

The protein localises to the cytoplasm. The catalysed reaction is 4-(phosphooxy)-L-threonine + NAD(+) = 3-amino-2-oxopropyl phosphate + CO2 + NADH. The protein operates within cofactor biosynthesis; pyridoxine 5'-phosphate biosynthesis; pyridoxine 5'-phosphate from D-erythrose 4-phosphate: step 4/5. In terms of biological role, catalyzes the NAD(P)-dependent oxidation of 4-(phosphooxy)-L-threonine (HTP) into 2-amino-3-oxo-4-(phosphooxy)butyric acid which spontaneously decarboxylates to form 3-amino-2-oxopropyl phosphate (AHAP). This Pasteurella multocida (strain Pm70) protein is Putative 4-hydroxythreonine-4-phosphate dehydrogenase.